We begin with the raw amino-acid sequence, 177 residues long: Inner membrane protein p22 (177 aa).

At 1 to 7 the chain is on the intravirion side; sequence MFNIKMT. A helical membrane pass occupies residues 8-28; sequence ISVLLIALIVLLIIILVVFLY. At 29–177 the chain is on the virion surface side; that stretch reads YKKQQPPKKV…IALPRNHKHA (149 aa).

It belongs to the asfivirus inner membrane protein p22 family.

The protein resides in the virion membrane. Its subcellular location is the host cell membrane. The polypeptide is Inner membrane protein p22 (African swine fever virus (isolate Warthog/Namibia/Wart80/1980) (ASFV)).